A 348-amino-acid polypeptide reads, in one-letter code: Large ribosomal subunit protein uL3m (348 aa).

The N-terminal 40 residues, 1–40 (MPGWRLLAQAGARVLGCGARGLGADPGLERRKNILFFVRN), are a transit peptide targeting the mitochondrion.

Belongs to the universal ribosomal protein uL3 family. In terms of assembly, component of the mitochondrial ribosome large subunit (39S) which comprises a 16S rRNA and about 50 distinct proteins.

The protein localises to the mitochondrion. This is Large ribosomal subunit protein uL3m (Mrpl3) from Mus musculus (Mouse).